An 803-amino-acid chain; its full sequence is Translation initiation factor IF-2 (803 aa).

Disordered stretches follow at residues 95-125 and 138-178; these read PVVE…EKAE and EVKE…EREE. Positions 111-121 are enriched in polar residues; sequence VPLTSDTTNLN. The span at 138-155 shows a compositional bias: basic and acidic residues; that stretch reads EVKEEAKKTPSEKKETPK. Positions 156-167 are enriched in basic residues; it reads KGPRKETRRSRK. Residues 168-178 show a composition bias toward basic and acidic residues; that stretch reads PDKEDKWEREE. The tr-type G domain maps to 302–471; it reads PRAPVVTIMG…LLQAEVLELK (170 aa). A G1 region spans residues 311 to 318; the sequence is GHVDHGKT. 311–318 contributes to the GTP binding site; sequence GHVDHGKT. Residues 336–340 are G2; it reads GITQH. The tract at residues 357-360 is G3; sequence DTPG. GTP is bound by residues 357–361 and 411–414; these read DTPGH and NKID. The tract at residues 411-414 is G4; that stretch reads NKID. The segment at 447-449 is G5; sequence SAK.

The protein belongs to the TRAFAC class translation factor GTPase superfamily. Classic translation factor GTPase family. IF-2 subfamily.

The protein localises to the cytoplasm. Functionally, one of the essential components for the initiation of protein synthesis. Protects formylmethionyl-tRNA from spontaneous hydrolysis and promotes its binding to the 30S ribosomal subunits. Also involved in the hydrolysis of GTP during the formation of the 70S ribosomal complex. The sequence is that of Translation initiation factor IF-2 from Coxiella burnetii (strain Dugway 5J108-111).